Here is a 157-residue protein sequence, read N- to C-terminus: Pyruvoyl-dependent arginine decarboxylase 1 (157 aa).

The residue at position 41 (Ser41) is a Pyruvic acid (Ser).

Belongs to the PdaD family. The cofactor is pyruvate.

It carries out the reaction L-arginine + H(+) = agmatine + CO2. The polypeptide is Pyruvoyl-dependent arginine decarboxylase 1 (pdaD1) (Archaeoglobus fulgidus (strain ATCC 49558 / DSM 4304 / JCM 9628 / NBRC 100126 / VC-16)).